We begin with the raw amino-acid sequence, 391 residues long: Tyrosinase-like protein phomQ2 (391 aa).

The disordered stretch occupies residues 1–21; it reads MDNVGCEASSSRDPKGKKAVG. The chain crosses the membrane as a helical span at residues 61 to 81; that stretch reads IRGFICATIIFVVCLGALSYI. Residues N97 and N141 are each glycosylated (N-linked (GlcNAc...) asparagine). Residues H160 and H169 each coordinate Cu cation. Residues N204, N246, and N261 are each glycosylated (N-linked (GlcNAc...) asparagine). H298 and H324 together coordinate Cu cation. N-linked (GlcNAc...) asparagine glycosylation is present at N353.

It belongs to the tyrosinase family. Cu(2+) is required as a cofactor.

Its subcellular location is the membrane. Its pathway is mycotoxin biosynthesis. In terms of biological role, tyrosinase-like protein; part of the gene cluster that mediates the biosynthesis of the phomopsins, a group of hexapeptide mycotoxins which infects lupins and causes lupinosis disease in livestock. Within the pathway, phomQ2 is involved in the generation of the common 13-membered macrocycle, possibly by catalyzing the hydroxylation of Tyr. The pathway starts with the processing of the precursor phomA by several endopeptidases including kexin proteases as well as the cluster-specific S41 family peptidase phomP1 and the oligopeptidase phomG to produce 10 identical copies of the hexapeptide Tyr-Val-Ile-Pro-Ile-Asp. After being excised from the precursor peptide, the core peptides are cyclized and modified post-translationally by enzymes encoded within the gene cluster. The timing and order of proteolysis of the phomA precursor and PTMs are still unknown. Two tyrosinase-like enzymes, phomQ1 and phomQ2, catalyze the chlorination and hydroxylation of Tyr, respectively. PhomYb, is proposed to be involved in the construction of the macrocyclic structure. The other 4 ustYa family proteins may be involved in PTMs that generate the unique structure of phomopsin A. PhomYa is required for the hydroxylation of C-beta of Tyr. PhomYc, phomYd, and phomYe are responsible for the biosynthesis of 2,3-dehydroisoleucine (dIle), 2,3-dehydroaspartic acid (dAsp), and 3,4-dehydroproline (dPro), respectively. While dIle formation by phomYc is indispensable for the installation of dAsp by phomYd, the order of the other PTMs have not been elucidated yet. Most of the biosynthetic enzymes likely have broad substrate specificity, and thus, there might be a metabolic grid from a precursor to phomopsin A. The enzyme(s) responsible for the biosynthesis of 3,4-dehydrovaline (dVal) have also not been identified yet. Finally, phomM acts as an S-adenosylmethionine-dependent alpha-N-methyltransferase that catalyzes two successive N-methylation reactions, converting N-desmethyl-phomopsin A to phomopsin A and phomopsin A further to an N,N-dimethylated congener called phomopsin E. This Diaporthe leptostromiformis (Lupinosis disease fungus) protein is Tyrosinase-like protein phomQ2.